Consider the following 139-residue polypeptide: uncharacterized protein (139 aa).

The tract at residues 83 to 109 (LIPPKKTSPATSSSLKPPRRPRGCLNG) is disordered. The segment covering 86–98 (PKKTSPATSSSLK) has biased composition (low complexity).

It to M.pneumoniae MPN_091 and MPN_463.

This is an uncharacterized protein from Mycoplasma pneumoniae (strain ATCC 29342 / M129 / Subtype 1) (Mycoplasmoides pneumoniae).